A 178-amino-acid polypeptide reads, in one-letter code: MSSAKPINVYSIPELNQALDEALPSVFARLNYERSYALLDAKLYIGYSIAVVAGLSFFLDKKFERDQIVTYQKLLVGAYFVLSLLFWYFSRFIEKGTVYVGKRRGTKEEIYVKTKFEKNEPLYLVELVQKKKGENSKKELKAKLEVNKVFNESGYLQNDAYFKWFSEQHNVLDTKKNE.

Residues 1–37 are Cytoplasmic-facing; that stretch reads MSSAKPINVYSIPELNQALDEALPSVFARLNYERSYA. Residues 38 to 58 traverse the membrane as a helical segment; sequence LLDAKLYIGYSIAVVAGLSFF. Over 59–67 the chain is Lumenal; sequence LDKKFERDQ. A helical transmembrane segment spans residues 68–88; that stretch reads IVTYQKLLVGAYFVLSLLFWY. Topologically, residues 89-178 are cytoplasmic; sequence FSRFIEKGTV…HNVLDTKKNE (90 aa).

Belongs to the SPCS2 family. As to quaternary structure, component of the signal peptidase complex (SPC) composed of a catalytic subunit SEC11 and three accessory subunits SPC1, SPC2 and SPC3. The complex induces a local thinning of the ER membrane which is used to measure the length of the signal peptide (SP) h-region of protein substrates. This ensures the selectivity of the complex towards h-regions shorter than 18-20 amino acids. SPC associates with the translocon complex. Interacts with SBH1 and SEB2/SBH2.

It localises to the endoplasmic reticulum membrane. Its function is as follows. Component of the signal peptidase complex (SPC) which catalyzes the cleavage of N-terminal signal sequences from nascent proteins as they are translocated into the lumen of the endoplasmic reticulum. Enhances the enzymatic activity of SPC and facilitates the interactions between different components of the translocation site. This is Signal peptidase complex subunit 2 (SPC2) from Saccharomyces cerevisiae (strain ATCC 204508 / S288c) (Baker's yeast).